Consider the following 92-residue polypeptide: Small ribosomal subunit protein uS19c (92 aa).

The protein belongs to the universal ribosomal protein uS19 family.

The protein resides in the plastid. Its subcellular location is the chloroplast. In terms of biological role, protein S19 forms a complex with S13 that binds strongly to the 16S ribosomal RNA. The protein is Small ribosomal subunit protein uS19c of Coffea arabica (Arabian coffee).